Consider the following 113-residue polypeptide: ATP synthase epsilon chain (113 aa).

It belongs to the ATPase epsilon chain family. As to quaternary structure, F-type ATPases have 2 components, CF(1) - the catalytic core - and CF(0) - the membrane proton channel. CF(1) has five subunits: alpha(3), beta(3), gamma(1), delta(1), epsilon(1). CF(0) has three main subunits: a, b and c.

The protein localises to the cell membrane. Its function is as follows. Produces ATP from ADP in the presence of a proton gradient across the membrane. The chain is ATP synthase epsilon chain from Wolbachia pipientis subsp. Culex pipiens (strain wPip).